Here is a 101-residue protein sequence, read N- to C-terminus: Small ribosomal subunit protein uS14 (101 aa).

The tract at residues 1–20 (MAKTSAVNRNKMRERMASRD) is disordered. Residues 11-20 (KMRERMASRD) are compositionally biased toward basic and acidic residues.

This sequence belongs to the universal ribosomal protein uS14 family. In terms of assembly, part of the 30S ribosomal subunit. Contacts proteins S3 and S10.

Binds 16S rRNA, required for the assembly of 30S particles and may also be responsible for determining the conformation of the 16S rRNA at the A site. The polypeptide is Small ribosomal subunit protein uS14 (Granulibacter bethesdensis (strain ATCC BAA-1260 / CGDNIH1)).